Reading from the N-terminus, the 373-residue chain is Peroxisomal biogenesis factor 3 (373 aa).

At 1–15 (MLRSMWNFLKRHKKK) the chain is on the cytoplasmic side. The tract at residues 1–45 (MLRSMWNFLKRHKKKCIFLGTVLGGVYILGKYGQKKIREIQEREA) is targeting to peroxisomes. Residues 16-36 (CIFLGTVLGGVYILGKYGQKK) traverse the membrane as a helical segment. Residues 37–116 (IREIQEREAA…LKIISFTRSI (80 aa)) are Peroxisomal-facing. Residues 117-140 (VAVYSTCMLVVLLRVQLNIIGGYI) form a helical membrane-spanning segment. The segment at 120 to 136 (YSTCMLVVLLRVQLNII) is interaction with PEX19. Residues 141–373 (YLDNATVGKN…AFSTPQQLEK (233 aa)) lie on the Cytoplasmic side of the membrane.

It belongs to the peroxin-3 family. Interacts with PEX19.

It is found in the peroxisome membrane. Involved in peroxisome biosynthesis and integrity. Assembles membrane vesicles before the matrix proteins are translocated. As a docking factor for PEX19, is necessary for the import of peroxisomal membrane proteins in the peroxisomes. This Cricetulus longicaudatus (Long-tailed dwarf hamster) protein is Peroxisomal biogenesis factor 3 (PEX3).